Reading from the N-terminus, the 351-residue chain is Peroxidase C1B (351 aa).

Positions 1–28 (MHSPSSTSFTWILITLGCLAFYASLSDA) are cleaved as a signal peptide. 4 disulfide bridges follow: Cys39–Cys119, Cys72–Cys77, Cys125–Cys329, and Cys205–Cys237. N-linked (GlcNAc...) asparagine glycosylation is present at Asn41. His70 serves as the catalytic Proton acceptor. The Ca(2+) site is built by Asp71, Val74, Gly76, Asp78, and Ser80. A glycan (N-linked (GlcNAc...) asparagine) is linked at Asn85. Pro167 lines the substrate pocket. Position 198 (His198) interacts with heme b. Position 199 (Thr199) interacts with Ca(2+). Asn214, Asn226, and Asn242 each carry an N-linked (GlcNAc...) asparagine glycan. Ca(2+)-binding residues include Asp250, Thr253, and Asp258. Residue Asn283 is glycosylated (N-linked (GlcNAc...) asparagine).

The protein belongs to the peroxidase family. Classical plant (class III) peroxidase subfamily. Ca(2+) serves as cofactor. It depends on heme b as a cofactor.

The protein localises to the secreted. The protein resides in the vacuole. It carries out the reaction 2 a phenolic donor + H2O2 = 2 a phenolic radical donor + 2 H2O. Removal of H(2)O(2), oxidation of toxic reductants, biosynthesis and degradation of lignin, suberization, auxin catabolism, response to environmental stresses such as wounding, pathogen attack and oxidative stress. These functions might be dependent on each isozyme/isoform in each plant tissue. The sequence is that of Peroxidase C1B (PRXC1B) from Armoracia rusticana (Horseradish).